Here is a 327-residue protein sequence, read N- to C-terminus: Methionyl-tRNA formyltransferase (327 aa).

(6S)-5,6,7,8-tetrahydrofolate is bound at residue Ser-121–Pro-124.

Belongs to the Fmt family.

It catalyses the reaction L-methionyl-tRNA(fMet) + (6R)-10-formyltetrahydrofolate = N-formyl-L-methionyl-tRNA(fMet) + (6S)-5,6,7,8-tetrahydrofolate + H(+). Attaches a formyl group to the free amino group of methionyl-tRNA(fMet). The formyl group appears to play a dual role in the initiator identity of N-formylmethionyl-tRNA by promoting its recognition by IF2 and preventing the misappropriation of this tRNA by the elongation apparatus. This chain is Methionyl-tRNA formyltransferase, found in Burkholderia multivorans (strain ATCC 17616 / 249).